A 609-amino-acid polypeptide reads, in one-letter code: Probable G-protein coupled receptor 153 (609 aa).

The Extracellular segment spans residues 1–11; the sequence is MSDERRLPGSA. The chain crosses the membrane as a helical span at residues 12 to 32; it reads VGWLVCGGLSLLANAWGILSV. Topologically, residues 33–41 are cytoplasmic; the sequence is GAKQKKWKP. The chain crosses the membrane as a helical span at residues 42–62; that stretch reads LEFLLCTLAATHMLNVAVPIA. At 63–84 the chain is on the extracellular side; the sequence is TYSVVQLRRQRPDFEWNEGLCK. The chain crosses the membrane as a helical span at residues 85 to 105; it reads VFVSTFYTLTLATCFSVTSLS. Over 106–126 the chain is Cytoplasmic; the sequence is YHRMWMVCWPVNYRLSNAKKQ. The helical transmembrane segment at 127–147 threads the bilayer; that stretch reads AVHTVMGIWMVSFILSALPAV. Topologically, residues 148–175 are extracellular; that stretch reads GWHDTSERFYTHGCRFIVAEIGLGFGVC. The chain crosses the membrane as a helical span at residues 176-196; it reads FLLLVGGSVAMGVICTAIALF. The Cytoplasmic portion of the chain corresponds to 197–243; it reads QTLAVQVGRQADRRAFTVPTIVVEDAQGKRRSSIDGSEPAKTSLQTT. Residues 244-264 traverse the membrane as a helical segment; it reads GLVTTIVFIYDCLMGFPVLVV. The Extracellular portion of the chain corresponds to 265–276; it reads SFSSLRADASAP. A helical transmembrane segment spans residues 277-297; it reads WMALCVLWCSVAQALLLPVFL. Residues 298–609 are Cytoplasmic-facing; sequence WACDRYRADL…LHSDSLGSAS (312 aa). Disordered regions lie at residues 446 to 496 and 514 to 609; these read DAPP…SASA and ALRR…GSAS. 2 stretches are compositionally biased toward low complexity: residues 458–479 and 527–536; these read ESLL…RDSP and AAPDGADPGE. The segment covering 571–583 has biased composition (gly residues); that stretch reads EPGGLRAAGGGGS. Residues 584–596 are compositionally biased toward low complexity; that stretch reads TSSFLSSPSESSG.

The protein belongs to the G-protein coupled receptor 1 family.

It localises to the cell membrane. Orphan receptor. The chain is Probable G-protein coupled receptor 153 (GPR153) from Homo sapiens (Human).